The primary structure comprises 295 residues: N-acetylmuramic acid 6-phosphate etherase (295 aa).

The SIS domain maps to Thr53–Lys216. Glu81 (proton donor) is an active-site residue. The active site involves Glu112.

It belongs to the GCKR-like family. MurNAc-6-P etherase subfamily. Homodimer.

It carries out the reaction N-acetyl-D-muramate 6-phosphate + H2O = N-acetyl-D-glucosamine 6-phosphate + (R)-lactate. Its pathway is amino-sugar metabolism; N-acetylmuramate degradation. Specifically catalyzes the cleavage of the D-lactyl ether substituent of MurNAc 6-phosphate, producing GlcNAc 6-phosphate and D-lactate. The sequence is that of N-acetylmuramic acid 6-phosphate etherase from Staphylococcus saprophyticus subsp. saprophyticus (strain ATCC 15305 / DSM 20229 / NCIMB 8711 / NCTC 7292 / S-41).